The primary structure comprises 371 residues: Cytochrome b (371 aa).

Helical transmembrane passes span 25-45 (FGSM…FLAI), 69-90 (WIMQ…YIHI), 105-125 (WLSG…GYVL), and 170-190 (FFAL…IHII). Heme b contacts are provided by H75 and H89. Heme b is bound by residues H174 and H188. Residue H193 participates in a ubiquinone binding. The next 4 helical transmembrane spans lie at 218–238 (YKDL…LSFS), 280–300 (LGGT…PFTH), 312–332 (LSQT…WTAT), and 339–358 (FITI…IMNP).

This sequence belongs to the cytochrome b family. The cytochrome bc1 complex contains 3 respiratory subunits (MT-CYB, CYC1 and UQCRFS1), 2 core proteins (UQCRC1 and UQCRC2) and probably 6 low-molecular weight proteins. It depends on heme b as a cofactor.

It is found in the mitochondrion inner membrane. Its function is as follows. Component of the ubiquinol-cytochrome c reductase complex (complex III or cytochrome b-c1 complex) that is part of the mitochondrial respiratory chain. The b-c1 complex mediates electron transfer from ubiquinol to cytochrome c. Contributes to the generation of a proton gradient across the mitochondrial membrane that is then used for ATP synthesis. The chain is Cytochrome b (MT-CYB) from Micrurus fulvius (Eastern coral snake).